A 535-amino-acid chain; its full sequence is Heat shock factor protein 2 (535 aa).

Residues lysine 2, lysine 82, lysine 135, lysine 139, lysine 151, lysine 210, lysine 218, and lysine 237 each participate in a glycyl lysine isopeptide (Lys-Gly) (interchain with G-Cter in SUMO2) cross-link. Residues 7-112 mediate DNA binding; it reads VPAFLSKLWT…LLENIKRKVS (106 aa). Positions 119–192 are hydrophobic repeat HR-A/B; that stretch reads NKIRQEDLTK…VTLVQNNQLV (74 aa). The segment at 298–325 is disordered; it reads QSGEQSEPAREPLRVGSAGSSSPLMSSA. Over residues 313–325 the composition is skewed to low complexity; it reads GSAGSSSPLMSSA. Positions 359-384 are hydrophobic repeat HR-C; that stretch reads LLDYLDSIDCSLEDFQAMLSGRQFSI. The interval 418-437 is disordered; that stretch reads TKSSVVQHVSEEGRKSKSKP. Residues 426–437 show a composition bias toward basic and acidic residues; the sequence is VSEEGRKSKSKP.

The protein belongs to the HSF family. In terms of assembly, DNA-binding homotrimer in stressed or heat shocked cells, otherwise found as a homodimer. As to expression, isoform alpha is expressed predominantly in testis while isoform beta is expressed predominantly in heart and brain.

It is found in the cytoplasm. The protein localises to the nucleus. DNA-binding protein that specifically binds heat shock promoter elements (HSE) and activates transcription. In higher eukaryotes, HSF is unable to bind to the HSE unless the cells are heat shocked. HSF2 is expressed in a form that binds DNA constitutively but loses DNA binding by incubation at greater than 41 degrees C. This Mus musculus (Mouse) protein is Heat shock factor protein 2 (Hsf2).